Consider the following 458-residue polypeptide: V-type ATP synthase beta chain (458 aa).

Belongs to the ATPase alpha/beta chains family.

Functionally, produces ATP from ADP in the presence of a proton gradient across the membrane. The V-type beta chain is a regulatory subunit. The chain is V-type ATP synthase beta chain from Fusobacterium nucleatum subsp. nucleatum (strain ATCC 25586 / DSM 15643 / BCRC 10681 / CIP 101130 / JCM 8532 / KCTC 2640 / LMG 13131 / VPI 4355).